The following is a 104-amino-acid chain: Ig lambda-1 chain C region (104 aa).

One can recognise an Ig-like domain in the interval 6–99 (PSVTLFPPSS…EENTVEKSLS (94 aa)). The cysteines at positions 27 and 85 are disulfide-linked.

The sequence is that of Ig lambda-1 chain C region from Rattus norvegicus (Rat).